A 554-amino-acid chain; its full sequence is Esterase cest-33 (554 aa).

Gly-2 is lipidated: N-myristoyl glycine. An intrachain disulfide couples Cys-76 to Cys-98. The active-site Acyl-ester intermediate is the Ser-208. Active-site charge relay system residues include Glu-331 and His-446.

The protein belongs to the type-B carboxylesterase/lipase family.

The protein localises to the cytoplasm. The protein resides in the cell membrane. It carries out the reaction a carboxylic ester + H2O = an alcohol + a carboxylate + H(+). The sequence is that of Esterase cest-33 from Caenorhabditis elegans.